Consider the following 148-residue polypeptide: Probable histone H2B.1 (148 aa).

A compositionally biased stretch (basic and acidic residues) spans 1–32 (MAPKGEKKPAEKKPAEEKKSTVAEKAPAEKKP). Positions 1–57 (MAPKGEKKPAEKKPAEEKKSTVAEKAPAEKKPKAGKKLPKEGGSAAGEKKKKRSKKS) are disordered. Residues lysine 7, lysine 36, and lysine 37 each carry the N6-acetyllysine modification. Lysine 144 is covalently cross-linked (Glycyl lysine isopeptide (Lys-Gly) (interchain with G-Cter in ubiquitin)).

The protein belongs to the histone H2B family. As to quaternary structure, the nucleosome is a histone octamer containing two molecules each of H2A, H2B, H3 and H4 assembled in one H3-H4 heterotetramer and two H2A-H2B heterodimers. The octamer wraps approximately 147 bp of DNA. Can be acetylated to form H2BK6ac, H2BK33ac and H2BK34ac. Post-translationally, monoubiquitinated to form H2BK143ub1; may give a specific tag for epigenetic transcriptional activation.

It localises to the nucleus. Its subcellular location is the chromosome. Core component of nucleosome. Nucleosomes wrap and compact DNA into chromatin, limiting DNA accessibility to the cellular machineries which require DNA as a template. Histones thereby play a central role in transcription regulation, DNA repair, DNA replication and chromosomal stability. DNA accessibility is regulated via a complex set of post-translational modifications of histones, also called histone code, and nucleosome remodeling. The sequence is that of Probable histone H2B.1 from Medicago truncatula (Barrel medic).